A 368-amino-acid polypeptide reads, in one-letter code: D-amino-acid oxidase (368 aa).

FAD is bound by residues A11, S14, K35, H36, C46, S47, G51, N53, and F174. C230 and C285 are oxidised to a cystine. Y244, Y260, and R308 together coordinate (R)-lactate. Y244, Y260, and R308 together coordinate anthranilate. FAD contacts are provided by R308, G334, G337, Y338, and Q339. The Microbody targeting signal motif lies at 366-368 (ARL).

It belongs to the DAMOX/DASOX family. Homotetramer. Requires FAD as cofactor. In terms of processing, the disulfide bond might contribute to the high thermal stability of the protein.

It localises to the peroxisome matrix. The enzyme catalyses a D-alpha-amino acid + O2 + H2O = a 2-oxocarboxylate + H2O2 + NH4(+). The catalysed reaction is D-alanine + O2 + H2O = pyruvate + H2O2 + NH4(+). It carries out the reaction D-glutamate + O2 + H2O = H2O2 + 2-oxoglutarate + NH4(+). It catalyses the reaction D-serine + O2 + H2O = 3-hydroxypyruvate + H2O2 + NH4(+). The enzyme catalyses D-phenylalanine + O2 + H2O = 3-phenylpyruvate + H2O2 + NH4(+). The catalysed reaction is D-arginine + O2 + H2O = 5-guanidino-2-oxopentanoate + H2O2 + NH4(+). It carries out the reaction D-methionine + O2 + H2O = 4-methylsulfanyl-2-oxobutanoate + H2O2 + NH4(+). It catalyses the reaction D-leucine + O2 + H2O = 4-methyl-2-oxopentanoate + H2O2 + NH4(+). The enzyme catalyses D-lysine + O2 + H2O = 6-amino-2-oxohexanoate + H2O2 + NH4(+). The catalysed reaction is D-valine + O2 + H2O = 3-methyl-2-oxobutanoate + H2O2 + NH4(+). It carries out the reaction D-histidine + O2 + H2O = 3-(imidazol-5-yl)pyruvate + H2O2 + NH4(+). It catalyses the reaction D-glutamine + O2 + H2O = 2-oxoglutaramate + H2O2 + NH4(+). The enzyme catalyses D-isoleucine + O2 + H2O = (R)-3-methyl-2-oxopentanoate + H2O2 + NH4(+). The catalysed reaction is D-allo-isoleucine + O2 + H2O = (S)-3-methyl-2-oxopentanoate + H2O2 + NH4(+). It carries out the reaction D-threonine + O2 + H2O = (S)-3-hydroxy-2-oxobutanoate + H2O2 + NH4(+). It catalyses the reaction D-asparagine + O2 + H2O = 2-oxosuccinamate + H2O2 + NH4(+). The enzyme catalyses D-tryptophan + O2 + H2O = indole-3-pyruvate + H2O2 + NH4(+). The catalysed reaction is D-tyrosine + O2 + H2O = 3-(4-hydroxyphenyl)pyruvate + H2O2 + NH4(+). Its activity is regulated as follows. Partially inhibited by benzoate, crotonate, and D-malate. Its function is as follows. Catalyzes the oxidative deamination of D-amino acids with broad substrate specificity. Enables the organism to utilize D-amino acids as a source of nutrients. Unusually, has high activity on D-glutamate. This Talaromyces emersonii (Thermophilic fungus) protein is D-amino-acid oxidase.